The sequence spans 426 residues: Inhibin beta A chain (426 aa).

The first 20 residues, 1–20, serve as a signal peptide directing secretion; sequence MPLLWLRGFLLASCWIIVKS. Positions 21–310 are excised as a propeptide; the sequence is SPTPGSEGHS…EDHPHRRRRR (290 aa). N-linked (GlcNAc...) asparagine glycosylation occurs at asparagine 165. A compositionally biased stretch (polar residues) spans 177-186; the sequence is QQQKHPQGSS. Disordered regions lie at residues 177–201 and 260–291; these read QQQKHPQGSSDTREEAEEADLMEER and KKKKEEEGEGKKKDGGEAGAGVDEEKEQSHRP. Over residues 263–275 the composition is skewed to basic and acidic residues; it reads KEEEGEGKKKDGG. Cystine bridges form between cysteine 314–cysteine 322, cysteine 321–cysteine 391, cysteine 350–cysteine 423, and cysteine 354–cysteine 425.

The protein belongs to the TGF-beta family. As to quaternary structure, dimeric, linked by one or more disulfide bonds. Inhibin A is a dimer of alpha/INHA and beta-A/INHBA. Activin A is a homodimer of beta-A/INHBA. Activin AB is a dimer of beta-A/INHBA and beta-B/INHBB. Interacts with FST and FSTL3; these interactions prevent activin A interaction to its type II receptor. Activin A interacts with ACVR2A. Activin A interacts with BMPR2. Inhibin A interacts with ACVR1; this interaction creates a non-signaling complex (NSC) that inhibits ACVR1-mediated BMP signaling. Inhibin A interacts with ACVR2A.

It is found in the secreted. Inhibins/activins are involved in regulating a number of diverse functions such as hypothalamic and pituitary hormone secretion, gonadal hormone secretion, germ cell development and maturation, erythroid differentiation, insulin secretion, nerve cell survival, embryonic axial development or bone growth, depending on their subunit composition. Its function is as follows. Activin A is a homodimer of INHBA that plays a role in several essential biological processes including embryonic development, stem cell maintenance and differentiation, haematopoiesis, cell proliferation and tissue fibrosis. Signals through type I (such as ACVR1B or ACVR1C) and type II receptors (such as ACVR2A, ACVR2B or BMPR2) which, upon ligand binding, phosphorylate SMAD2 and SMAD3 intracellular signaling mediators that form a complex with SMAD4, translocate to the nucleus and modulate gene expression. Can also activate alternative non-canonical intracellular signaling pathways including the p38 MAPK, extracellular signal-regulated kinases 1/2 (ERK1/2) and c-Jun N-terminal kinases (JNKs) to modulate cell migration and differentiation. Alternatively, promotes osteoblastic differentiation via ACVRL1-SMAD1/5/9 pathway. In addition, can engage the type I receptor ACVR1 to form an ACVR1-activin A-type II receptor non-signaling complex (NSC) that renders receptors unavailable for engagement with BMPs, hence resulting in an apparent inhibition of ACVR1-mediated BMP signaling. Functionally, inhibin A is a dimer of alpha/INHA and beta-A/INHBA that functions as a feedback regulator in the hypothalamic-pituitary-gonadal (HPG) axis. Inhibits the secretion of FSH from the anterior pituitary gland by acting on pituitary gonadotrope cells. Antagonizes activin A by binding to the proteoglycan, betaglycan, and forming a stable complex with and, thereby, sequestering type II activin receptors while excluding type I receptor. The sequence is that of Inhibin beta A chain (INHBA) from Equus caballus (Horse).